The sequence spans 511 residues: MEEFKGYFEKSGSIQQHFLYPLLFQEYIYALAHNHGLNVNGSIFYELPEISGYDKKFSSLLVKRLITRVYQQNYLINSVNHSNPNRFVGHNKNFYSQMISEGFAVIVEIPFSLRLVSSLEEKKEIPKSQNLRSIHSIFPFFEDNFSHLNWISDILIPYPDHLEMLVQILQCWIQDVPSLHLLRIFFHEYHNWGNPITSRKSNYYGLSKENPRLFWSLYNPYVVKCESIFNFLRKQSSYLRSTFYGTILERTHFYGKMKPFGVTCANDFQKTLWLFKDPFMHYVRYQGKSILVSKGTHLLMKKWKSYFVNFWQCHFRFWSQPGRIHISQFSKFSFYFLGYLSSVPINPSAVKSQMLESSFLIDIVTKKFETIVPIIPIIGSLSKAKFCNVSGNPISKPVWADLSDSDIIDRFGRICRNLSHYYSGSSKKKSLYRIKYILRLSCARTLARKHKSTVRAFLQRLGSEFLEEFFTEEEKVLSLILPRISYPLHKLYRERIWYLDIIRINNLTNHL.

It belongs to the intron maturase 2 family. MatK subfamily.

Its subcellular location is the plastid. It localises to the chloroplast. In terms of biological role, usually encoded in the trnK tRNA gene intron. Probably assists in splicing its own and other chloroplast group II introns. In Pistia stratiotes (Water lettuce), this protein is Maturase K.